A 343-amino-acid chain; its full sequence is DNA polymerase III subunit delta (343 aa).

Domain regions lie at residues 1–140 (MIRL…VTCQ), 141–210 (TPEQ…NDAA), and 211–343 (HFTP…FIDG).

This sequence belongs to the DNA polymerase HolA subunit family. In terms of assembly, the DNA polymerase III holoenzyme complex contains at least 10 different subunits organized into 3 functionally essential subassemblies: the Pol III core, the beta sliding clamp processivity factor and the clamp-loading complex. The Pol III core (subunits alpha, epsilon and theta) contains the polymerase and the 3'-5' exonuclease proofreading activities. The polymerase is tethered to the template via the dimeric beta sliding clamp processivity factor. The clamp-loading complex (also called gamma complex) assembles the beta sliding clamp onto the primed template and plays a central role in the organization and communication at the replication fork. The clamp-loading complex contains delta, delta', psi and chi, and 3 copies of either or both of two different DnaX proteins, gamma and tau. The DNA replisome complex has a single clamp loader (3 tau and 1 each of delta, delta', psi and chi subunits) which binds 3 Pol III cores (1 core on the leading strand and 2 on the lagging strand) each with a beta sliding clamp dimer. Additional proteins in the replisome are other copies of gamma, psi and chi, Ssb, DNA helicase and RNA primase. The clamp loader hydrolyzes ATP to assemble the beta processivity factor onto the primed template and plays a central role in the organization and communication at the replication fork; the minimal complex to load the beta sliding clamp on DNA is delta, delta', gamma.

It catalyses the reaction DNA(n) + a 2'-deoxyribonucleoside 5'-triphosphate = DNA(n+1) + diphosphate. Its function is as follows. Part of the beta sliding clamp loading complex, which hydrolyzes ATP to load the beta clamp onto primed DNA to form the DNA replication pre-initiation complex. DNA polymerase III is a complex, multichain enzyme responsible for most of the replicative synthesis in bacteria. This DNA polymerase also exhibits 3'-5' exonuclease activity. The delta subunit is the wrench that will open the beta subunit dimer, which has been modeled to leave a gap large enough for ssDNA to pass through. The gamma complex (gamma(3),delta,delta') is thought to load beta dimers onto DNA by binding ATP which alters the complex's conformation so it can bind beta sliding clamp dimers and open them at one interface. Primed DNA is recognized, ATP is hydrolyzed releasing the gamma complex and closing the beta sliding clamp ring around the primed DNA. This Escherichia coli (strain K12) protein is DNA polymerase III subunit delta (holA).